We begin with the raw amino-acid sequence, 299 residues long: Glycerol-3-phosphate dehydrogenase [NAD(P)+] (299 aa).

Trp11, Arg30, His31, and Lys79 together coordinate NADPH. The sn-glycerol 3-phosphate site is built by Lys79, Gly107, and Ser109. NADPH is bound at residue Ala111. Residues Lys161, Asp214, Ser224, Arg225, and Asn226 each coordinate sn-glycerol 3-phosphate. Residue Lys161 is the Proton acceptor of the active site. Arg225 provides a ligand contact to NADPH. Residues Val249 and Glu251 each coordinate NADPH.

The protein belongs to the NAD-dependent glycerol-3-phosphate dehydrogenase family.

It is found in the cytoplasm. The catalysed reaction is sn-glycerol 3-phosphate + NAD(+) = dihydroxyacetone phosphate + NADH + H(+). It catalyses the reaction sn-glycerol 3-phosphate + NADP(+) = dihydroxyacetone phosphate + NADPH + H(+). The protein operates within membrane lipid metabolism; glycerophospholipid metabolism. Catalyzes the reduction of the glycolytic intermediate dihydroxyacetone phosphate (DHAP) to sn-glycerol 3-phosphate (G3P), the key precursor for phospholipid synthesis. In Nitratiruptor sp. (strain SB155-2), this protein is Glycerol-3-phosphate dehydrogenase [NAD(P)+].